Consider the following 152-residue polypeptide: Endoribonuclease YbeY (152 aa).

Zn(2+) contacts are provided by histidine 114, histidine 118, and histidine 124.

The protein belongs to the endoribonuclease YbeY family. Requires Zn(2+) as cofactor.

It is found in the cytoplasm. Functionally, single strand-specific metallo-endoribonuclease involved in late-stage 70S ribosome quality control and in maturation of the 3' terminus of the 16S rRNA. The protein is Endoribonuclease YbeY of Wigglesworthia glossinidia brevipalpis.